The sequence spans 378 residues: N-acetyllactosaminide beta-1,3-N-acetylglucosaminyltransferase 4 (378 aa).

Topologically, residues 1–28 (MLPPQPSAAHQGRGGRSGLLPKGPAMLC) are cytoplasmic. The chain crosses the membrane as a helical; Signal-anchor for type II membrane protein span at residues 29-49 (RLCWLVSYSLAVLLLGCLLFL). Residues 50–378 (RKAAKPAGDP…KCAAGPIPQR (329 aa)) lie on the Lumenal side of the membrane. The tract at residues 59–81 (PTAHQPFWAPPTPRHSRCPPNHT) is disordered. N-linked (GlcNAc...) asparagine glycosylation occurs at asparagine 192.

It belongs to the glycosyltransferase 31 family. As to expression, mainly expressed in brain tissues such as whole brain, hippocampus, amygdala, cerebellum and caudate nucleus. Also expressed in colon, esophagus and kidney.

The protein resides in the golgi apparatus membrane. It catalyses the reaction a beta-D-galactosyl-(1-&gt;4)-N-acetyl-beta-D-glucosaminyl derivative + UDP-N-acetyl-alpha-D-glucosamine = an N-acetyl-beta-D-glucosaminyl-(1-&gt;3)-beta-D-galactosyl-(1-&gt;4)-N-acetyl-beta-D-glucosaminyl derivative + UDP + H(+). The protein operates within protein modification; protein glycosylation. Its function is as follows. Beta-1,3-N-acetylglucosaminyltransferase involved in the synthesis of poly-N-acetyllactosamine. Has activity for type 2 oligosaccharides. The chain is N-acetyllactosaminide beta-1,3-N-acetylglucosaminyltransferase 4 (B3GNT4) from Homo sapiens (Human).